The sequence spans 27 residues: Caerulein precursor fragment R4 (27 aa).

As to expression, expressed by the skin glands.

Its subcellular location is the secreted. Functionally, antimicrobial peptide. In Xenopus ruwenzoriensis (Uganda clawed frog), this protein is Caerulein precursor fragment R4.